Here is a 185-residue protein sequence, read N- to C-terminus: p53 apoptosis effector related to PMP-22 (185 aa).

A run of 4 helical transmembrane segments spans residues 13–33 (WILP…IAAQ), 74–94 (VAAL…ISLV), 105–125 (LPFI…ALII), and 143–163 (WAYG…ILFC).

This sequence belongs to the TMEM47 family.

Its subcellular location is the cell junction. The protein resides in the desmosome. The protein localises to the cell membrane. It is found in the cytoplasm. Its function is as follows. Component of intercellular desmosome junctions. Positively regulates apoptosis in the early-stage embryo in response to UV irradiation, this is partially dependent on tp53 activation. Required for the survival of cell populations in the developing notochord and skin, therefore required for normal embryogenesis beyond 30 hpf. Acts as a positive regulator of endothelial cell apoptosis in response to blood flow-derived shear stress. This is p53 apoptosis effector related to PMP-22 from Danio rerio (Zebrafish).